Reading from the N-terminus, the 132-residue chain is Small ribosomal subunit protein uS11 (132 aa).

This sequence belongs to the universal ribosomal protein uS11 family. Part of the 30S ribosomal subunit. Interacts with proteins S7 and S18. Binds to IF-3.

Located on the platform of the 30S subunit, it bridges several disparate RNA helices of the 16S rRNA. Forms part of the Shine-Dalgarno cleft in the 70S ribosome. This chain is Small ribosomal subunit protein uS11, found in Chlamydia caviae (strain ATCC VR-813 / DSM 19441 / 03DC25 / GPIC) (Chlamydophila caviae).